Reading from the N-terminus, the 156-residue chain is Small ribosomal subunit protein uS7 (156 aa).

It belongs to the universal ribosomal protein uS7 family. Part of the 30S ribosomal subunit. Contacts proteins S9 and S11.

In terms of biological role, one of the primary rRNA binding proteins, it binds directly to 16S rRNA where it nucleates assembly of the head domain of the 30S subunit. Is located at the subunit interface close to the decoding center, probably blocks exit of the E-site tRNA. This is Small ribosomal subunit protein uS7 from Pseudomonas fluorescens (strain ATCC BAA-477 / NRRL B-23932 / Pf-5).